Here is a 203-residue protein sequence, read N- to C-terminus: Probable GTP-binding protein EngB (203 aa).

The region spanning 24-199 (DGSEVAFAGR…HTVIETWLGL (176 aa)) is the EngB-type G domain. GTP is bound by residues 32–39 (GRSNAGKS), 59–63 (GRTQQ), 77–80 (DLPG), 144–147 (TKAD), and 178–180 (FSS). Positions 39 and 61 each coordinate Mg(2+).

The protein belongs to the TRAFAC class TrmE-Era-EngA-EngB-Septin-like GTPase superfamily. EngB GTPase family. Mg(2+) is required as a cofactor.

In terms of biological role, necessary for normal cell division and for the maintenance of normal septation. The polypeptide is Probable GTP-binding protein EngB (Xylella fastidiosa (strain Temecula1 / ATCC 700964)).